Consider the following 737-residue polypeptide: Polyribonucleotide nucleotidyltransferase (737 aa).

Residues Asp489 and Asp495 each contribute to the Mg(2+) site. A KH domain is found at 556–615; sequence PKIDTIKIDVDKIKIVIGKGGETIDKIIAETGVKIDIDEEGNVSIYSSDQDAINRAKEII. The S1 motif domain maps to 625–693; that stretch reads DEVYRAKVVR…EKGRVDASMK (69 aa). The interval 691–737 is disordered; the sequence is SMKALLPRPPKPERDEKGEKSERPYRPRHHKDHKPKKEITETPKDSE. Basic and acidic residues-rich tracts occupy residues 700 to 715 and 725 to 737; these read PKPE…ERPY and PKKE…KDSE.

The protein belongs to the polyribonucleotide nucleotidyltransferase family. Mg(2+) is required as a cofactor.

The protein localises to the cytoplasm. The catalysed reaction is RNA(n+1) + phosphate = RNA(n) + a ribonucleoside 5'-diphosphate. Involved in mRNA degradation. Catalyzes the phosphorolysis of single-stranded polyribonucleotides processively in the 3'- to 5'-direction. The protein is Polyribonucleotide nucleotidyltransferase of Streptococcus pneumoniae (strain Hungary19A-6).